The chain runs to 124 residues: Keratin-associated protein 12-2 (124 aa).

Tandem repeats lie at residues 10–13, 14–18, 19–23, 24–28, 33–38, 39–43, 44–48, 49–52, 53–57, 58–62, 63–67, 68–72, 73–77, 78–82, 83–87, 88–92, 98–102, 103–107, 108–112, and 113–117. The 20 X 5 AA approximate repeats stretch occupies residues 10–117; that stretch reads CQAACVPSSC…CPTLVYRPIS (108 aa).

This sequence belongs to the KRTAP type 12 family. In terms of assembly, interacts with hair keratins.

In the hair cortex, hair keratin intermediate filaments are embedded in an interfilamentous matrix, consisting of hair keratin-associated proteins (KRTAP), which are essential for the formation of a rigid and resistant hair shaft through their extensive disulfide bond cross-linking with abundant cysteine residues of hair keratins. The matrix proteins include the high-sulfur and high-glycine-tyrosine keratins. The sequence is that of Keratin-associated protein 12-2 from Bos taurus (Bovine).